Consider the following 265-residue polypeptide: Seminal vesicle secretory protein 3A (265 aa).

A signal peptide spans 1–20; sequence MKSIFFSLSLLLLLEKKAAG. 5 tandem repeats follow at residues 116-119, 122-125, 129-132, 136-139, and 142-145. The tract at residues 116–145 is 5 X 4 AA tandem repeats of Q-X-K-[ST]; sequence QIKSQTQVKSYAAQLKSQPGQLKTIGQVKS.

In terms of processing, glycosylated. Covalently cross-linked by transglutaminase, which is important for the formation of the gelatinous copulatory plug. Five repeats of Q-X-K-(S/T) in the central region of the protein serve as the transglutaminase substrate site(s). Highly expressed in the seminal vesicle where it is detected in luminal epithelium of the mucosa folds, and also in luminal fluid (at protein level). Not detected in other tissues tested.

The protein localises to the secreted. Functionally, component of the copulatory plug. This Mus musculus (Mouse) protein is Seminal vesicle secretory protein 3A.